The primary structure comprises 344 residues: S-adenosylmethionine:tRNA ribosyltransferase-isomerase (344 aa).

Belongs to the QueA family. As to quaternary structure, monomer.

The protein resides in the cytoplasm. The catalysed reaction is 7-aminomethyl-7-carbaguanosine(34) in tRNA + S-adenosyl-L-methionine = epoxyqueuosine(34) in tRNA + adenine + L-methionine + 2 H(+). It participates in tRNA modification; tRNA-queuosine biosynthesis. Functionally, transfers and isomerizes the ribose moiety from AdoMet to the 7-aminomethyl group of 7-deazaguanine (preQ1-tRNA) to give epoxyqueuosine (oQ-tRNA). This chain is S-adenosylmethionine:tRNA ribosyltransferase-isomerase, found in Pediococcus pentosaceus (strain ATCC 25745 / CCUG 21536 / LMG 10740 / 183-1w).